We begin with the raw amino-acid sequence, 382 residues long: Ribosomal RNA large subunit methyltransferase G (382 aa).

It belongs to the methyltransferase superfamily. RlmG family.

It is found in the cytoplasm. The catalysed reaction is guanosine(1835) in 23S rRNA + S-adenosyl-L-methionine = N(2)-methylguanosine(1835) in 23S rRNA + S-adenosyl-L-homocysteine + H(+). Its function is as follows. Specifically methylates the guanine in position 1835 (m2G1835) of 23S rRNA. The chain is Ribosomal RNA large subunit methyltransferase G from Pseudoalteromonas translucida (strain TAC 125).